A 141-amino-acid chain; its full sequence is Small ribosomal subunit protein eS17w (141 aa).

It belongs to the eukaryotic ribosomal protein eS17 family.

The sequence is that of Small ribosomal subunit protein eS17w (RPS17D) from Arabidopsis thaliana (Mouse-ear cress).